A 104-amino-acid chain; its full sequence is Thioredoxin (104 aa).

Residues 2–104 enclose the Thioredoxin domain; that stretch reads AIVKATDQSF…ALQELVNKHL (103 aa). A disulfide bridge links cysteine 29 with cysteine 32.

It belongs to the thioredoxin family.

Functionally, participates in various redox reactions through the reversible oxidation of its active center dithiol to a disulfide and catalyzes dithiol-disulfide exchange reactions. This chain is Thioredoxin (trxA), found in Bacillus subtilis (strain 168).